Reading from the N-terminus, the 181-residue chain is Oligoribonuclease (181 aa).

The Exonuclease domain maps to 8–171; that stretch reads LIWIDLEMTG…DDIRESVAEL (164 aa). Tyr129 is a catalytic residue.

Belongs to the oligoribonuclease family.

The protein resides in the cytoplasm. Its function is as follows. 3'-to-5' exoribonuclease specific for small oligoribonucleotides. The polypeptide is Oligoribonuclease (Sodalis glossinidius (strain morsitans)).